A 1154-amino-acid polypeptide reads, in one-letter code: Diacylglycerol kinase eta (1154 aa).

Residues Met-1–Gln-54 form a disordered region. Positions Thr-59–Ser-152 constitute a PH domain. 2 Phorbol-ester/DAG-type zinc fingers span residues Met-169–Cys-219 and Pro-241–Cys-292. One can recognise a DAGKc domain in the interval Phe-322–Glu-457. 3 disordered regions span residues Gln-560–Pro-608, Asp-634–Ala-678, and Phe-1123–Asn-1154. Over residues Pro-573–Leu-586 the composition is skewed to acidic residues. The span at Asp-656 to Pro-667 shows a compositional bias: basic and acidic residues. The span at Gln-1131–Asn-1154 shows a compositional bias: polar residues.

It belongs to the eukaryotic diacylglycerol kinase family. In terms of assembly, interacts with RAF1 and BRAF. In terms of processing, phosphorylated. Phosphorylation does not inhibit catalytic activity. As to expression, expressed in a wide variety of tissues. Most abundant in the brain and testis; also found in lung, spleen, and prostate (at protein level).

The protein resides in the cytoplasm. The protein localises to the cell membrane. It carries out the reaction a 1,2-diacyl-sn-glycerol + ATP = a 1,2-diacyl-sn-glycero-3-phosphate + ADP + H(+). It catalyses the reaction 1,2-di-(9Z-octadecenoyl)-sn-glycerol + ATP = 1,2-di-(9Z-octadecenoyl)-sn-glycero-3-phosphate + ADP + H(+). It participates in lipid metabolism; glycerolipid metabolism. Diacylglycerol kinase that converts diacylglycerol/DAG into phosphatidic acid/phosphatidate/PA and regulates the respective levels of these two bioactive lipids. Thereby, acts as a central switch between the signaling pathways activated by these second messengers with different cellular targets and opposite effects in numerous biological processes. Plays a key role in promoting cell growth. Activates the Ras/B-Raf/C-Raf/MEK/ERK signaling pathway induced by EGF. Regulates the recruitment of RAF1 and BRAF from cytoplasm to membranes and their heterodimerization. The protein is Diacylglycerol kinase eta (DGKH) of Mesocricetus auratus (Golden hamster).